A 59-amino-acid polypeptide reads, in one-letter code: Large ribosomal subunit protein uL30 (59 aa).

Belongs to the universal ribosomal protein uL30 family. Part of the 50S ribosomal subunit.

The protein is Large ribosomal subunit protein uL30 of Photorhabdus laumondii subsp. laumondii (strain DSM 15139 / CIP 105565 / TT01) (Photorhabdus luminescens subsp. laumondii).